Consider the following 357-residue polypeptide: Norreticuline-7-O-methyltransferase (357 aa).

Position 225 (aspartate 225) interacts with S-adenosyl-L-methionine. Histidine 263 (proton acceptor) is an active-site residue.

This sequence belongs to the class I-like SAM-binding methyltransferase superfamily. Cation-independent O-methyltransferase family. As to expression, expressed instems, leaves, roots and seedlings.

Its function is as follows. Involved in the biosynthesis of benzylisoquinoline alkaloids. Catalyzes specifically the methylation of norreticuline at position seven to produce norlaudanine. No activity with norcoclaurine, reticuline, norlaudanosoline, norisoorientaline, scoulerine, salutaridinol, oripavine, salsolinol, codeine or morphine. Involved in papaverine biosynthesis. The sequence is that of Norreticuline-7-O-methyltransferase from Papaver somniferum (Opium poppy).